We begin with the raw amino-acid sequence, 153 residues long: Aspartate carbamoyltransferase regulatory chain (153 aa).

Residues Cys109, Cys114, Cys138, and Cys141 each contribute to the Zn(2+) site.

This sequence belongs to the PyrI family. Contains catalytic and regulatory chains. Zn(2+) serves as cofactor.

Its function is as follows. Involved in allosteric regulation of aspartate carbamoyltransferase. In Nitrosopumilus maritimus (strain SCM1), this protein is Aspartate carbamoyltransferase regulatory chain.